Reading from the N-terminus, the 1360-residue chain is S-layer protein A (1360 aa).

The first 24 residues, 1 to 24, serve as a signal peptide directing secretion; sequence MNKSAIRYLSLLLVFLMGGSFLAG.

This sequence belongs to the Sulfolobales SlaA family. In terms of assembly, the mushroom-shaped unit cells of the Sulfolobales' S-layers may consist of three SlaB subunits and six SlaA subunits.

It is found in the secreted. The protein resides in the cell wall. It localises to the S-layer. Functionally, S-layer large protein. May form the highly ordered outer sheath. This Metallosphaera sedula (strain ATCC 51363 / DSM 5348 / JCM 9185 / NBRC 15509 / TH2) protein is S-layer protein A.